We begin with the raw amino-acid sequence, 581 residues long: Rhodanese-like domain-containing protein 6 (581 aa).

The region spanning 158–258 (ENKELVLLDA…YLEQFPSGGF (101 aa)) is the Rhodanese domain. The active-site Cysteine persulfide intermediate is the Cys-216.

In Arabidopsis thaliana (Mouse-ear cress), this protein is Rhodanese-like domain-containing protein 6 (STR6).